Here is a 229-residue protein sequence, read N- to C-terminus: Synaptogyrin-3 (229 aa).

Residue Met1 is modified to N-acetylmethionine. In terms of domain architecture, MARVEL spans 20–172 (FARRPQTLLR…LTVKALQRFR (153 aa)). The next 4 membrane-spanning stretches (helical) occupy residues 30-50 (VVSW…GYVN), 70-90 (FGVV…LLDV), 105-125 (VLLD…GFCF), and 148-168 (AAIA…VKAL). Over residues 209–223 (QSPPFTETLDTSSKG) the composition is skewed to polar residues. The interval 209 to 229 (QSPPFTETLDTSSKGYQVPAY) is disordered.

Belongs to the synaptogyrin family. Interacts (via N-terminus) with SLC6A3 (via N-terminus). May interact with VMAT2. As to expression, specifically expressed in brain. Found in the brain across the dorsal and ventral corpus striatum as well as in the cortex.

The protein localises to the cytoplasmic vesicle. The protein resides in the secretory vesicle. It is found in the synaptic vesicle membrane. Its subcellular location is the synapse. Functionally, may play a role in regulated exocytosis. May indirectly regulate the activity of the plasma membrane dopamine transporter SLC6A3 and thereby regulate dopamine transport back from the synaptic cleft into the presynaptic terminal. This Mus musculus (Mouse) protein is Synaptogyrin-3.